Consider the following 238-residue polypeptide: uncharacterized protein (238 aa).

4 helical membrane passes run 13–33, 40–60, 107–127, and 140–160; these read TLFF…FGII, GSVG…LILG, VVLI…FCQV, and VISL…PMAF. 2 consecutive 4Fe-4S ferredoxin-type domains span residues 178–208 and 204–233; these read PFFQ…TEKL and ITEK…FSYA. Positions 188, 191, 194, 198, 213, 216, 219, and 223 each coordinate [4Fe-4S] cluster.

Its subcellular location is the cell membrane. This is an uncharacterized protein from Methanocaldococcus jannaschii (strain ATCC 43067 / DSM 2661 / JAL-1 / JCM 10045 / NBRC 100440) (Methanococcus jannaschii).